A 223-amino-acid polypeptide reads, in one-letter code: MESGSTPPTDKQIRENEQDGTGHQGKLLARPTSTRQQQQQQQQQPSHSVSQSVSQSPQTQDCLTIVANMSADQHLQALTKVVVNNLENQHDWTQVQIHIQDNLPRPLIYGLPPKRLYVHPDEQIDIIRAEKQLNQRVPQEPELEWVLPLHLAEKWSISDFAAVFDAITALPPGGESVNANEDAQWQLWRGPKRGKRILLATVQDDSTVTYYWMHNGLVKPRQN.

The tract at residues 1–55 (MESGSTPPTDKQIRENEQDGTGHQGKLLARPTSTRQQQQQQQQQPSHSVSQSVSQ) is disordered. Low complexity predominate over residues 30–55 (RPTSTRQQQQQQQQQPSHSVSQSVSQ).

It belongs to the SEN15 family. As to quaternary structure, tRNA splicing endonuclease is a heterotetramer composed of tsp-2/sen2, tsp-1/sen15, tsp-4/sen34 and tsp-5/sen54. Interacts directly with tsp-4/sen34.

In terms of biological role, non-catalytic subunit of the tRNA-splicing endonuclease complex, a complex responsible for identification and cleavage of the splice sites in pre-tRNA. It cleaves pre-tRNA at the 5' and 3' splice sites to release the intron. The products are an intron and two tRNA half-molecules bearing 2',3' cyclic phosphate and 5'-OH termini. There are no conserved sequences at the splice sites, but the intron is invariably located at the same site in the gene, placing the splice sites an invariant distance from the constant structural features of the tRNA body. This Neurospora crassa (strain ATCC 24698 / 74-OR23-1A / CBS 708.71 / DSM 1257 / FGSC 987) protein is Probable tRNA-splicing endonuclease subunit tsp-1 (tsp-1).